The sequence spans 238 residues: Monocyte to macrophage differentiation factor (238 aa).

The Cytoplasmic segment spans residues 1-28; it reads MRFRNRFQRFMNHRAPANGRYKPTCYEH. Residues 29-49 traverse the membrane as a helical segment; that stretch reads AANCYTHAFLIVPAIVGSALL. The Lumenal portion of the chain corresponds to 50-61; sequence HRLSDDCWEKIT. Residues 62–82 form a helical membrane-spanning segment; sequence AWIYGMGLCALFIVSTVFHIV. The Cytoplasmic portion of the chain corresponds to 83–101; it reads SWKKSHLRTVEHCFHMCDR. A helical membrane pass occupies residues 102–122; it reads MVIYFFIAASYAPWLNLRELG. Pro-123 is a topological domain (lumenal). Residues 124 to 144 traverse the membrane as a helical segment; sequence LASHMRWFIWLMAAGGTIYVF. The Cytoplasmic portion of the chain corresponds to 145–151; it reads LYHEKYK. A helical transmembrane segment spans residues 152 to 172; sequence VVELFFYLTMGFSPALVVTSM. Over 173–174 the chain is Lumenal; it reads NN. A helical membrane pass occupies residues 175–195; sequence TDGLQELACGGLIYCLGVVFF. Topologically, residues 196–198 are cytoplasmic; the sequence is KSD. A helical transmembrane segment spans residues 199–219; sequence GIIPFAHAIWHLFVATAAAVH. Over 220-238 the chain is Lumenal; that stretch reads YYAIWKYLYRSPTDFIRHL.

It belongs to the ADIPOR family.

It is found in the late endosome membrane. It localises to the lysosome membrane. Its function is as follows. Involved in the dynamics of lysosomal membranes associated with microglial activation following brain lesion. This is Monocyte to macrophage differentiation factor from Mus musculus (Mouse).